The following is a 430-amino-acid chain: Asparagine--tRNA ligase (430 aa).

This sequence belongs to the class-II aminoacyl-tRNA synthetase family. Homodimer.

It localises to the cytoplasm. It catalyses the reaction tRNA(Asn) + L-asparagine + ATP = L-asparaginyl-tRNA(Asn) + AMP + diphosphate + H(+). In Bacillus licheniformis (strain ATCC 14580 / DSM 13 / JCM 2505 / CCUG 7422 / NBRC 12200 / NCIMB 9375 / NCTC 10341 / NRRL NRS-1264 / Gibson 46), this protein is Asparagine--tRNA ligase.